The sequence spans 180 residues: ATP-dependent protease subunit HslV (180 aa).

Thr5 is an active-site residue. Gly165, Cys168, and Thr171 together coordinate Na(+).

This sequence belongs to the peptidase T1B family. HslV subfamily. In terms of assembly, a double ring-shaped homohexamer of HslV is capped on each side by a ring-shaped HslU homohexamer. The assembly of the HslU/HslV complex is dependent on binding of ATP.

The protein resides in the cytoplasm. It carries out the reaction ATP-dependent cleavage of peptide bonds with broad specificity.. Allosterically activated by HslU binding. In terms of biological role, protease subunit of a proteasome-like degradation complex believed to be a general protein degrading machinery. This Helicobacter pylori (strain J99 / ATCC 700824) (Campylobacter pylori J99) protein is ATP-dependent protease subunit HslV.